We begin with the raw amino-acid sequence, 208 residues long: MPKVPVYNIEGQQIGEIELNDSIFNVPINTHVLHQAVVAHLANRRQGTFAAKTRAEVRGGGRKPWRQKGTGRARQGSIRAPTWRKGGVVFAKKPRDFSIDLPKKVRRLALKCALSSKVKENNLIVLDKWDMNQYRTKEVIRVLKNLGLENEKALIVIPEKNEYLQKSTKNIPEVKTLQVGNLNVFDILKYDKFIILQDAVKKVEEVYA.

The disordered stretch occupies residues 58–77 (RGGGRKPWRQKGTGRARQGS). Residues 60 to 71 (GGRKPWRQKGTG) are compositionally biased toward basic residues.

It belongs to the universal ribosomal protein uL4 family. Part of the 50S ribosomal subunit.

In terms of biological role, one of the primary rRNA binding proteins, this protein initially binds near the 5'-end of the 23S rRNA. It is important during the early stages of 50S assembly. It makes multiple contacts with different domains of the 23S rRNA in the assembled 50S subunit and ribosome. Forms part of the polypeptide exit tunnel. This chain is Large ribosomal subunit protein uL4, found in Caldicellulosiruptor saccharolyticus (strain ATCC 43494 / DSM 8903 / Tp8T 6331).